Consider the following 344-residue polypeptide: HTH-type transcriptional repressor MelR (344 aa).

Residues 2-58 (VRIKDIALKAKVSSATVSRILNEDESLSVAGETRQRVINIAEELGYQTVAKRRKSRG) form the HTH lacI-type domain. The H-T-H motif DNA-binding region spans 4-23 (IKDIALKAKVSSATVSRILN).

The protein resides in the cytoplasm. Represses the melibiose operon melREDCA in the absence of melibiose or raffinose. Binds to two binding sites at the promoter region of the operon. The chain is HTH-type transcriptional repressor MelR from Bacillus subtilis (strain 168).